Reading from the N-terminus, the 698-residue chain is Na(+)/H(+) antiporter NhaS5 (698 aa).

A run of 12 helical transmembrane segments spans residues 10 to 30 (SNPL…PPIF), 35 to 55 (LPGL…GLGV), 65 to 85 (LFTD…IDMV), 100 to 120 (LTFA…GYSF), 121 to 141 (NASV…YPIV), 156 to 176 (IGAT…CISI), 184 to 204 (AGLV…LIGF), 222 to 242 (QFLF…LINV), 275 to 295 (LFIP…AFLV), 300 to 320 (LFPL…VAAI), 333 to 353 (GLTM…AAVA), and 370 to 390 (VLNT…LMTA).

This sequence belongs to the monovalent cation:proton antiporter 2 (CPA2) transporter (TC 2.A.37) family.

It is found in the membrane. Functionally, na(+)/H(+) antiporter. This chain is Na(+)/H(+) antiporter NhaS5 (nhaS5), found in Synechocystis sp. (strain ATCC 27184 / PCC 6803 / Kazusa).